Reading from the N-terminus, the 332-residue chain is MLDEHFCDCIGEFLETSFHCILYIRGVYPSCLFSKSIKYDIPVPISRSDLLTRYISNSIDSLKPHFLKDTIEKISLTILNKYDKPIEKFIFEISSLNNTTNNKNKNNNNNNNNSDDDETFNYYINIQKQNYTSNNNNNNNNNINNNNNKPNLLQLEASFKAYIIKILMTTDSFYSEQNFYKTQQSSSSSSSLKTSGGGDGNGFISNSDGVIHFNEIDNETYQQIKSNQKNKKEDNDDNNNGDKDLKFTIHVHTKPTTSNIGLNTNLSNVILNINPLESPRRTNTTINQITPVWISTTEKDSEIENSYIIPLNSNITDGKTTIRTFTEQSITK.

Residues 4–332 (EHFCDCIGEF…RTFTEQSITK (329 aa)) enclose the HORMA domain. 2 disordered regions span residues 181-204 (KTQQ…NGFI) and 225-244 (KSNQ…GDKD). Over residues 230 to 244 (NKKEDNDDNNNGDKD) the composition is skewed to basic and acidic residues.

This sequence belongs to the MAD2 family.

It localises to the nucleus. Adapter protein able to interact with different proteins and involved in different biological processes. The chain is Mitotic spindle assembly checkpoint protein MAD2B (mad2l2) from Dictyostelium discoideum (Social amoeba).